Here is an 866-residue protein sequence, read N- to C-terminus: Primer-independent DNA polymerase PolB (866 aa).

The exonuclease domain stretch occupies residues serine 50 to methionine 286. Residues alanine 287–tyrosine 385 form a palm1 domain region. A TPR1 domain region spans residues glycine 386–proline 481. The fingers domain stretch occupies residues phenylalanine 482–threonine 522. The segment at alanine 523 to threonine 549 is TPR2 domain. A palm2 domain region spans residues glycine 550–leucine 678. The interval isoleucine 679–valine 866 is thumb domain.

Requires Mn(2+) as cofactor.

It carries out the reaction DNA(n) + a 2'-deoxyribonucleoside 5'-triphosphate = DNA(n+1) + diphosphate. DNA polymerase with primer-independent templated DNA polymerization activity, primer-dependent DNA polymerization activity with strand displacement, translesion synthesis activity across non-bulky base damage, 3'-5' exodeoxyribonuclease activity, and de novo primer synthesis activity. The enzyme is processive and faithful. Translation synthesis across abasic sites is coupled to de novo primer synthesis. Overexpression of wild-type protein increases survival of cells upon mitomycin C or UV treatment. The polypeptide is Primer-independent DNA polymerase PolB (pi-polB) (Escherichia coli).